The chain runs to 162 residues: 2-C-methyl-D-erythritol 2,4-cyclodiphosphate synthase (162 aa).

A divalent metal cation is bound by residues Asp-9 and His-11. 4-CDP-2-C-methyl-D-erythritol 2-phosphate-binding positions include Asp-9 to His-11 and His-35 to Ser-36. His-43 lines the a divalent metal cation pocket. 4-CDP-2-C-methyl-D-erythritol 2-phosphate is bound by residues Asp-57–Gly-59, Phe-62–Asp-66, Thr-133–Glu-136, Phe-140, and Arg-143.

Belongs to the IspF family. As to quaternary structure, homotrimer. The cofactor is a divalent metal cation.

The enzyme catalyses 4-CDP-2-C-methyl-D-erythritol 2-phosphate = 2-C-methyl-D-erythritol 2,4-cyclic diphosphate + CMP. It functions in the pathway isoprenoid biosynthesis; isopentenyl diphosphate biosynthesis via DXP pathway; isopentenyl diphosphate from 1-deoxy-D-xylulose 5-phosphate: step 4/6. Functionally, involved in the biosynthesis of isopentenyl diphosphate (IPP) and dimethylallyl diphosphate (DMAPP), two major building blocks of isoprenoid compounds. Catalyzes the conversion of 4-diphosphocytidyl-2-C-methyl-D-erythritol 2-phosphate (CDP-ME2P) to 2-C-methyl-D-erythritol 2,4-cyclodiphosphate (ME-CPP) with a corresponding release of cytidine 5-monophosphate (CMP). This Histophilus somni (strain 2336) (Haemophilus somnus) protein is 2-C-methyl-D-erythritol 2,4-cyclodiphosphate synthase.